Reading from the N-terminus, the 132-residue chain is MTMTDPIADMLTRIRNAQSVYHKQVEIPASKLKRELVDILKREGYINDFEYIDDNKQGILRIELKYSDNDEQVISGLKRISKPGLRVYAKKDEIPRVLGGLGIAVVSTSSGLLTDREARDQGIGGEILCYIW.

It belongs to the universal ribosomal protein uS8 family. Part of the 30S ribosomal subunit. Contacts proteins S5 and S12.

Its function is as follows. One of the primary rRNA binding proteins, it binds directly to 16S rRNA central domain where it helps coordinate assembly of the platform of the 30S subunit. This is Small ribosomal subunit protein uS8 from Natranaerobius thermophilus (strain ATCC BAA-1301 / DSM 18059 / JW/NM-WN-LF).